A 288-amino-acid chain; its full sequence is MSIIVKNLTHIYNEGMPFASKALDDVSFEIKDRDFVGLIGHTGSGKSTLIQHLNGLLKPSSGEIFINDFNITDKNLNLTEIRKRVGVVFQYPEYQLFEETIDKDIAFGPSNLGLEESEIHNRVKASMEAVGLDYEGFKDKSPFELSGGQKRRVAIAGVIAMNPEVLILDEPTAGLDPGGRDEIFNLIKDLHEKKNMTIILSSHSMDDMAKLAKTLIVMNHGSVEFMGTPREVFKSNASKLKDIGLDIPQVLELALKLREKGFDISEDILTLEEAKQEILKVVRGRGLC.

Residues Ile-3–Leu-245 form the ABC transporter domain. Gly-40–Ser-47 serves as a coordination point for ATP.

Belongs to the ABC transporter superfamily. Energy-coupling factor EcfA family. As to quaternary structure, forms a stable energy-coupling factor (ECF) transporter complex composed of 2 membrane-embedded substrate-binding proteins (S component), 2 ATP-binding proteins (A component) and 2 transmembrane proteins (T component).

It is found in the cell membrane. In terms of biological role, ATP-binding (A) component of a common energy-coupling factor (ECF) ABC-transporter complex. Unlike classic ABC transporters this ECF transporter provides the energy necessary to transport a number of different substrates. This chain is Energy-coupling factor transporter ATP-binding protein EcfA2, found in Clostridioides difficile (strain 630) (Peptoclostridium difficile).